Consider the following 1512-residue polypeptide: DNA polymerase (1512 aa).

Belongs to the DNA polymerase type-B family.

Its subcellular location is the host nucleus. It catalyses the reaction DNA(n) + a 2'-deoxyribonucleoside 5'-triphosphate = DNA(n+1) + diphosphate. The protein is DNA polymerase (57/58) of Ictalurid herpesvirus 1 (strain Auburn) (IcHV-1).